The sequence spans 451 residues: UDP-N-acetyl-alpha-D-muramoyl-L-alanyl-L-glutamate epimerase (451 aa).

It belongs to the MurL family.

It carries out the reaction UDP-N-acetyl-alpha-D-muramoyl-L-alanyl-L-glutamate + ATP + H2O = UDP-N-acetyl-alpha-D-muramoyl-L-alanyl-D-glutamate + AMP + diphosphate + H(+). The protein operates within cell wall biogenesis; peptidoglycan biosynthesis. Its function is as follows. Cell wall formation. Catalyzes epimerization of the terminal L-glutamate in UDP-N-acetyl-alpha-D-muramoyl-L-alanyl-L-glutamate. The sequence is that of UDP-N-acetyl-alpha-D-muramoyl-L-alanyl-L-glutamate epimerase from Xanthomonas oryzae pv. oryzae (strain MAFF 311018).